A 210-amino-acid chain; its full sequence is CLAVATA3/ESR (CLE)-related protein 4D (210 aa).

Positions 1 to 21 are cleaved as a signal peptide; that stretch reads MAKNAMLCLLILSVVLALAFA. The interval 21-83 is required for secretion from the host cytoplasm to the host apoplasm; sequence ATNKKDDEEP…SNQLPNNNWM (63 aa). Asparagine 32 and asparagine 59 each carry an N-linked (GlcNAc...) asparagine glycan. The interval 115-210 is disordered; sequence RRKTGTHSQR…APAGPDPIHH (96 aa). 4 stretches are compositionally biased toward basic and acidic residues: residues 125 to 137, 144 to 158, 165 to 179, and 186 to 200; these read HHEE…EKRG, PIHH…EKRG, and PIHH…EKRV. An A-1 repeat occupies 127–135; that stretch reads EETTLEQEK. A 4 X approximate repeat A region spans residues 129–198; it reads TTLEQEKRGA…HQDTKFEQEK (70 aa). One copy of the CLE-1 repeat lies at 136–147; the sequence is RGAPAGPDPIHH. The 4 X approximate repeat CLE stretch occupies residues 136-210; sequence RGAPAGPDPI…APAGPDPIHH (75 aa). One copy of the A-2 repeat lies at 148–156; it reads QDTTFEQEK. The stretch at 157–168 is one CLE-2 repeat; that stretch reads RGAPAGPDPIHH. The A-3 repeat unit spans residues 169–177; it reads QDTTLEQEK. The stretch at 178-189 is one CLE-3 repeat; it reads RVAGAGPDPIHH. The stretch at 190–198 is one A-4 repeat; sequence QDTKFEQEK. Residues 199 to 210 form a CLE-4 repeat; sequence RGAPAGPDPIHH.

It belongs to the CLV3/ESR signal peptide family. Highly expressed exclusively within the dorsal esophageal gland cell during syncytium formation in host plants.

Its subcellular location is the secreted. The protein resides in the host cytoplasm. It is found in the host extracellular space. The protein localises to the extracellular space. It localises to the apoplast. Functionally, mimics host plant CLE extracellular signal peptides that regulate cell fate. May play a role in the differentiation or division of feeding cells (syncytia) induced in plant roots during infection. The protein is CLAVATA3/ESR (CLE)-related protein 4D (CLE-4D) of Globodera rostochiensis (Golden nematode worm).